The primary structure comprises 179 residues: Protein GrpE (179 aa).

The segment covering 1-10 has biased composition (basic and acidic residues); the sequence is MSKKEEKQEE. The interval 1–23 is disordered; the sequence is MSKKEEKQEELQEEMEAVDAAGV.

The protein belongs to the GrpE family. As to quaternary structure, homodimer.

The protein resides in the cytoplasm. Functionally, participates actively in the response to hyperosmotic and heat shock by preventing the aggregation of stress-denatured proteins, in association with DnaK and GrpE. It is the nucleotide exchange factor for DnaK and may function as a thermosensor. Unfolded proteins bind initially to DnaJ; upon interaction with the DnaJ-bound protein, DnaK hydrolyzes its bound ATP, resulting in the formation of a stable complex. GrpE releases ADP from DnaK; ATP binding to DnaK triggers the release of the substrate protein, thus completing the reaction cycle. Several rounds of ATP-dependent interactions between DnaJ, DnaK and GrpE are required for fully efficient folding. This chain is Protein GrpE, found in Enterococcus faecalis (strain ATCC 700802 / V583).